Here is a 133-residue protein sequence, read N- to C-terminus: Ribosome-binding factor A (133 aa).

The protein belongs to the RbfA family. As to quaternary structure, monomer. Binds 30S ribosomal subunits, but not 50S ribosomal subunits or 70S ribosomes.

Its subcellular location is the cytoplasm. In terms of biological role, one of several proteins that assist in the late maturation steps of the functional core of the 30S ribosomal subunit. Associates with free 30S ribosomal subunits (but not with 30S subunits that are part of 70S ribosomes or polysomes). Required for efficient processing of 16S rRNA. May interact with the 5'-terminal helix region of 16S rRNA. This is Ribosome-binding factor A from Alteromonas mediterranea (strain DSM 17117 / CIP 110805 / LMG 28347 / Deep ecotype).